The chain runs to 637 residues: MNNQGRSILAWAALFIFVILLFNVFQSDGLLGVRNNITFSDFLTRVDEKTINSVKIQGRVIEGTANDGSTFSTYSPDYPDLVNRLTSNDVNIEVVPLETRMNTFLGFLISWFPMLLLIGVWVFFMRQMHGGGKAMGFGKSKARLLSDKGPKITFKDVAGIDEAKEELTEIVDFLRDPSKFQKLGGKIPKGCLLIGPPGTGKTLLAKAIAGEANVPFFSISGSDFVEMFVGVGASRVRDMFEQGKRNAPCIIFIDEIDAVGRHRGIGMGGGNDEREQTLNQMLVEMDGFEANEGVVIIAATNRPDVLDRALLRPGRFDRQIAVANPDINGREQILKVHLKKIKYNSTVLARIIARGTPGFSGAELANLVNEAALIAARLGKKEVDMHDMEEAKDKVLMGVVRRSIAMSEKEKRLTAYHEGGHALVGLYCPAASPIHKATIIPRGNALGMVQRLPETDEYSQNREQMESSIAVYMAGRVAEEIIFGRNKVTSGASSDIKGATNIARAMVTKAGLSDLIGPIFHGSNSDDMYGRQSSNEISEATAELIDAEVKRIITQGYEFAKDILTKHIDQLHTLANALIEYETLSGQQIKNLLSGRALDSEEENKFPFNDSHTIKIDKENLHEKVKSTKDKKENIIS.

The Cytoplasmic segment spans residues 1–6 (MNNQGR). Residues 7-27 (SILAWAALFIFVILLFNVFQS) traverse the membrane as a helical segment. At 28 to 103 (DGLLGVRNNI…VVPLETRMNT (76 aa)) the chain is on the periplasmic side. Residues 104–124 (FLGFLISWFPMLLLIGVWVFF) traverse the membrane as a helical segment. The Cytoplasmic segment spans residues 125-637 (MRQMHGGGKA…TKDKKENIIS (513 aa)). 195–202 (GPPGTGKT) serves as a coordination point for ATP. Zn(2+) is bound at residue His417. The active site involves Glu418. Residues His421 and Asp495 each coordinate Zn(2+).

The protein in the central section; belongs to the AAA ATPase family. In the C-terminal section; belongs to the peptidase M41 family. In terms of assembly, homohexamer. Zn(2+) is required as a cofactor.

It is found in the cell inner membrane. Functionally, acts as a processive, ATP-dependent zinc metallopeptidase for both cytoplasmic and membrane proteins. Plays a role in the quality control of integral membrane proteins. In Rickettsia prowazekii (strain Madrid E), this protein is ATP-dependent zinc metalloprotease FtsH.